Here is a 454-residue protein sequence, read N- to C-terminus: Pup--protein ligase (454 aa).

Position 9 (Glu-9) interacts with Mg(2+). Arg-53 is a binding site for ATP. Tyr-55 is a binding site for Mg(2+). The Proton acceptor role is filled by Asp-57. Glu-63 contributes to the Mg(2+) binding site. ATP-binding residues include Thr-66 and Trp-421.

Belongs to the Pup ligase/Pup deamidase family. Pup-conjugating enzyme subfamily.

The enzyme catalyses ATP + [prokaryotic ubiquitin-like protein]-L-glutamate + [protein]-L-lysine = ADP + phosphate + N(6)-([prokaryotic ubiquitin-like protein]-gamma-L-glutamyl)-[protein]-L-lysine.. Its pathway is protein degradation; proteasomal Pup-dependent pathway. The protein operates within protein modification; protein pupylation. Its function is as follows. Catalyzes the covalent attachment of the prokaryotic ubiquitin-like protein modifier Pup to the proteasomal substrate proteins, thereby targeting them for proteasomal degradation. This tagging system is termed pupylation. The ligation reaction involves the side-chain carboxylate of the C-terminal glutamate of Pup and the side-chain amino group of a substrate lysine. In Frankia casuarinae (strain DSM 45818 / CECT 9043 / HFP020203 / CcI3), this protein is Pup--protein ligase.